Consider the following 357-residue polypeptide: UDP-N-acetylglucosamine--N-acetylmuramyl-(pentapeptide) pyrophosphoryl-undecaprenol N-acetylglucosamine transferase (357 aa).

UDP-N-acetyl-alpha-D-glucosamine is bound by residues T7 to G9, N119, R159, S187, I241, and Q286.

This sequence belongs to the glycosyltransferase 28 family. MurG subfamily.

It localises to the cell inner membrane. It carries out the reaction di-trans,octa-cis-undecaprenyl diphospho-N-acetyl-alpha-D-muramoyl-L-alanyl-D-glutamyl-meso-2,6-diaminopimeloyl-D-alanyl-D-alanine + UDP-N-acetyl-alpha-D-glucosamine = di-trans,octa-cis-undecaprenyl diphospho-[N-acetyl-alpha-D-glucosaminyl-(1-&gt;4)]-N-acetyl-alpha-D-muramoyl-L-alanyl-D-glutamyl-meso-2,6-diaminopimeloyl-D-alanyl-D-alanine + UDP + H(+). Its pathway is cell wall biogenesis; peptidoglycan biosynthesis. In terms of biological role, cell wall formation. Catalyzes the transfer of a GlcNAc subunit on undecaprenyl-pyrophosphoryl-MurNAc-pentapeptide (lipid intermediate I) to form undecaprenyl-pyrophosphoryl-MurNAc-(pentapeptide)GlcNAc (lipid intermediate II). This Nitrosomonas europaea (strain ATCC 19718 / CIP 103999 / KCTC 2705 / NBRC 14298) protein is UDP-N-acetylglucosamine--N-acetylmuramyl-(pentapeptide) pyrophosphoryl-undecaprenol N-acetylglucosamine transferase.